We begin with the raw amino-acid sequence, 535 residues long: CTP synthase (535 aa).

The amidoligase domain stretch occupies residues 1–267 (MTKYIFVTGG…DQIVCDHLKL (267 aa)). Residue Ser13 participates in CTP binding. Ser13 serves as a coordination point for UTP. An ATP-binding site is contributed by 14–19 (SLGKGI). Position 54 (Tyr54) interacts with L-glutamine. Asp71 lines the ATP pocket. 2 residues coordinate Mg(2+): Asp71 and Glu141. CTP contacts are provided by residues 148 to 150 (DIE), 188 to 193 (KTKPTQ), and Lys224. Residues 188 to 193 (KTKPTQ) and Lys224 each bind UTP. 240–242 (RDA) is a binding site for ATP. The region spanning 292–534 (KIALVGKYVE…VRASITNKES (243 aa)) is the Glutamine amidotransferase type-1 domain. L-glutamine is bound at residue Gly354. Cys381 serves as the catalytic Nucleophile; for glutamine hydrolysis. L-glutamine is bound by residues 382-385 (LGMQ), Glu405, and Arg462. Catalysis depends on residues His507 and Glu509.

Belongs to the CTP synthase family. As to quaternary structure, homotetramer.

The enzyme catalyses UTP + L-glutamine + ATP + H2O = CTP + L-glutamate + ADP + phosphate + 2 H(+). It carries out the reaction L-glutamine + H2O = L-glutamate + NH4(+). The catalysed reaction is UTP + NH4(+) + ATP = CTP + ADP + phosphate + 2 H(+). Its pathway is pyrimidine metabolism; CTP biosynthesis via de novo pathway; CTP from UDP: step 2/2. Its activity is regulated as follows. Allosterically activated by GTP, when glutamine is the substrate; GTP has no effect on the reaction when ammonia is the substrate. The allosteric effector GTP functions by stabilizing the protein conformation that binds the tetrahedral intermediate(s) formed during glutamine hydrolysis. Inhibited by the product CTP, via allosteric rather than competitive inhibition. Its function is as follows. Catalyzes the ATP-dependent amination of UTP to CTP with either L-glutamine or ammonia as the source of nitrogen. Regulates intracellular CTP levels through interactions with the four ribonucleotide triphosphates. In Bacillus cereus (strain AH187), this protein is CTP synthase.